The sequence spans 141 residues: Nucleoside diphosphate kinase (141 aa).

ATP-binding residues include Lys-11, Phe-59, Arg-87, Thr-93, Arg-104, and Asn-114. The Pros-phosphohistidine intermediate role is filled by His-117.

The protein belongs to the NDK family. Homotetramer. The cofactor is Mg(2+).

The protein resides in the cytoplasm. It catalyses the reaction a 2'-deoxyribonucleoside 5'-diphosphate + ATP = a 2'-deoxyribonucleoside 5'-triphosphate + ADP. The catalysed reaction is a ribonucleoside 5'-diphosphate + ATP = a ribonucleoside 5'-triphosphate + ADP. Functionally, major role in the synthesis of nucleoside triphosphates other than ATP. The ATP gamma phosphate is transferred to the NDP beta phosphate via a ping-pong mechanism, using a phosphorylated active-site intermediate. This is Nucleoside diphosphate kinase from Paraburkholderia xenovorans (strain LB400).